A 264-amino-acid chain; its full sequence is Ribonuclease HII (264 aa).

In terms of domain architecture, RNase H type-2 spans 69 to 263; it reads KVVCGIDEVG…EENAKTITKP (195 aa). Asp-75, Glu-76, and Asp-166 together coordinate a divalent metal cation.

It belongs to the RNase HII family. It depends on Mn(2+) as a cofactor. Mg(2+) serves as cofactor.

The protein resides in the cytoplasm. It catalyses the reaction Endonucleolytic cleavage to 5'-phosphomonoester.. Its function is as follows. Endonuclease that specifically degrades the RNA of RNA-DNA hybrids. The chain is Ribonuclease HII from Macrococcus caseolyticus (strain JCSC5402) (Macrococcoides caseolyticum).